We begin with the raw amino-acid sequence, 535 residues long: Berberine bridge enzyme-like 27 (535 aa).

The signal sequence occupies residues 1-22; that stretch reads MEILRFLLSLFIYFLLLNLSLS. N-linked (GlcNAc...) asparagine glycans are attached at residues Asn18 and Asn66. The cysteines at positions 40 and 100 are disulfide-linked. In terms of domain architecture, FAD-binding PCMH-type spans 78–253; it reads ETPKPVSIIT…LSWKIRLLDV (176 aa). The residue at position 115 (His115) is a Pros-8alpha-FAD histidine. 3 N-linked (GlcNAc...) asparagine glycosylation sites follow: Asn146, Asn215, and Asn439.

It belongs to the oxygen-dependent FAD-linked oxidoreductase family. The cofactor is FAD. In terms of tissue distribution, accumulates in cell walls of etiolated hypocotyls.

It localises to the secreted. The protein localises to the cell wall. In Arabidopsis thaliana (Mouse-ear cress), this protein is Berberine bridge enzyme-like 27.